Here is a 614-residue protein sequence, read N- to C-terminus: Chaperone protein HtpG (614 aa).

The tract at residues 1 to 324 is a; substrate-binding; the sequence is MSQIETKEFQ…SEELPLNISR (324 aa). Residues 325-537 form a b region; that stretch reads ETMQDSALIA…SHYGTHSMQR (213 aa). Positions 538–614 are c; sequence MMQLMNRDLQ…LNEILEKALR (77 aa).

The protein belongs to the heat shock protein 90 family. In terms of assembly, homodimer.

It is found in the cytoplasm. Its function is as follows. Molecular chaperone. Has ATPase activity. The sequence is that of Chaperone protein HtpG from Desulfitobacterium hafniense (strain Y51).